Here is a 279-residue protein sequence, read N- to C-terminus: Protein gustavus (279 aa).

The B30.2/SPRY domain occupies 36–233; sequence PARIDILLDM…ITMRYIGGLD (198 aa). Residues 234–279 enclose the SOCS box domain; it reads PEPLPLMDLCRRTIRQKIGRTNLEEHIQQLQLPLSMKTYLLYKNRR. The tract at residues 236–279 is involved in binding to the Elongin BC complex; sequence PLPLMDLCRRTIRQKIGRTNLEEHIQQLQLPLSMKTYLLYKNRR.

This sequence belongs to the SPSB family. In terms of assembly, interacts (via B30.2/SPRY domain) with vas; this interaction may be necessary for the transport of vas to the posterior pole of the oocyte. Interacts with Cul-5. May associate with the Elongin BC complex composed of Elongin-B and Elongin-C. As to expression, expressed in ovaries, primarily in nurse cells and oocytes (at protein level).

It is found in the cytoplasm. It localises to the nucleus. Its function is as follows. Involved in the localization of vas to the posterior pole of the oocyte. Required maternally in the germ line for efficient primordial germ cell formation. The chain is Protein gustavus (gus) from Drosophila melanogaster (Fruit fly).